A 376-amino-acid chain; its full sequence is Lipid-A-disaccharide synthase (376 aa).

The protein belongs to the LpxB family.

The catalysed reaction is a lipid X + a UDP-2-N,3-O-bis[(3R)-3-hydroxyacyl]-alpha-D-glucosamine = a lipid A disaccharide + UDP + H(+). It participates in bacterial outer membrane biogenesis; LPS lipid A biosynthesis. In terms of biological role, condensation of UDP-2,3-diacylglucosamine and 2,3-diacylglucosamine-1-phosphate to form lipid A disaccharide, a precursor of lipid A, a phosphorylated glycolipid that anchors the lipopolysaccharide to the outer membrane of the cell. This chain is Lipid-A-disaccharide synthase, found in Pseudomonas fluorescens (strain Pf0-1).